The following is a 565-amino-acid chain: Dihydroxy-acid dehydratase (565 aa).

Residue aspartate 80 participates in Mg(2+) binding. Cysteine 121 is a binding site for [2Fe-2S] cluster. Residues aspartate 122 and lysine 123 each contribute to the Mg(2+) site. Residue lysine 123 is modified to N6-carboxylysine. A [2Fe-2S] cluster-binding site is contributed by cysteine 194. A Mg(2+)-binding site is contributed by glutamate 447. Catalysis depends on serine 473, which acts as the Proton acceptor.

The protein belongs to the IlvD/Edd family. As to quaternary structure, homodimer. The cofactor is [2Fe-2S] cluster. It depends on Mg(2+) as a cofactor.

It catalyses the reaction (2R)-2,3-dihydroxy-3-methylbutanoate = 3-methyl-2-oxobutanoate + H2O. The enzyme catalyses (2R,3R)-2,3-dihydroxy-3-methylpentanoate = (S)-3-methyl-2-oxopentanoate + H2O. It participates in amino-acid biosynthesis; L-isoleucine biosynthesis; L-isoleucine from 2-oxobutanoate: step 3/4. Its pathway is amino-acid biosynthesis; L-valine biosynthesis; L-valine from pyruvate: step 3/4. Its function is as follows. Functions in the biosynthesis of branched-chain amino acids. Catalyzes the dehydration of (2R,3R)-2,3-dihydroxy-3-methylpentanoate (2,3-dihydroxy-3-methylvalerate) into 2-oxo-3-methylpentanoate (2-oxo-3-methylvalerate) and of (2R)-2,3-dihydroxy-3-methylbutanoate (2,3-dihydroxyisovalerate) into 2-oxo-3-methylbutanoate (2-oxoisovalerate), the penultimate precursor to L-isoleucine and L-valine, respectively. This chain is Dihydroxy-acid dehydratase, found in Chlorobium phaeovibrioides (strain DSM 265 / 1930) (Prosthecochloris vibrioformis (strain DSM 265)).